The chain runs to 29 residues: Serum amyloid P-component (29 aa).

Residues 6–29 enclose the Pentraxin (PTX) domain; that stretch reads LGKVFVFSKESNVDDVKLLTPQTE.

It belongs to the pentraxin family. As to quaternary structure, homopentamer. Pentraxin (or pentaxin) have a discoid arrangement of 5 non-covalently bound subunits. The cofactor is Ca(2+).

It is found in the secreted. This Hippoglossus hippoglossus (Atlantic halibut) protein is Serum amyloid P-component.